We begin with the raw amino-acid sequence, 661 residues long: MDLTTPEVAEHPDVLRNMSRYTLGLLPSEPPVGDMNNEDSDTNTSITQSPTNSEKLTDILQESQDTKALQEKYLQNIYALTQNQLFKNVEDYSFYNLNREKFQRDKQTIVGVMRKRRHVLNKKIKRLQSHWKQVLGRWEENIARVDRLTEIDKTKNAKKSEPFIKRSTRKVMSNFTAGDIVRSEEEFLEILAKLEQQEKEASNVSEASRIATIPPMILSEEEVKSQYFNDQSRLVTDCPKFYHFQSMPDIWNEEQHSIFVQQFILHGKKFGKIAEAVPGKNSKECVLHYYLTKRTTDYRALVASATKTKGRRRKKLLPSQRGGKKKSKGSALMVDIEAADINKTEENINNQFQEASVTADNMNTWDNTPSVENVESANENVNNHNADEQMDEKIKSLVEGNSAYEIEKGAQEPDPMSIDMTDKSETVSGFKHDVDVYDTAENEGNNTLLQIKESVHEKTPTQDEPMDISQDTIKQEDYYEPKLEQHSSSKRNSISTRKEEDAASALANLSAVGRSISAVDESAHQGHLPGWDEKEEALIFSLAQGMNPMKMPLTPRRASTGPRPRPTFQLTEIDSPNRRRASDCITPSISKILKMVSEDAKSQRIDELSVEDQEHTTHSSHTTSDINAFPNSQSFPRASIHTLAALGEDIVERQSKNDKIV.

The tract at residues 25–52 (LLPSEPPVGDMNNEDSDTNTSITQSPTN) is disordered. Over residues 42–52 (TNTSITQSPTN) the composition is skewed to polar residues. The SANT domain maps to 246–297 (SMPDIWNEEQHSIFVQQFILHGKKFGKIAEAVPGKNSKECVLHYYLTKRTTD). Disordered regions lie at residues 306 to 329 (TKTKGRRRKKLLPSQRGGKKKSKG), 478 to 499 (YYEPKLEQHSSSKRNSISTRKE), 548 to 570 (PMKMPLTPRRASTGPRPRPTFQL), and 604 to 633 (RIDELSVEDQEHTTHSSHTTSDINAFPNSQ). The span at 308–328 (TKGRRRKKLLPSQRGGKKKSK) shows a compositional bias: basic residues. The span at 478 to 487 (YYEPKLEQHS) shows a compositional bias: basic and acidic residues. Positions 604–617 (RIDELSVEDQEHTT) are enriched in basic and acidic residues.

The protein localises to the nucleus. This is an uncharacterized protein from Schizosaccharomyces pombe (strain 972 / ATCC 24843) (Fission yeast).